A 390-amino-acid chain; its full sequence is uncharacterized protein (390 aa).

11 helical membrane passes run 10-30 (LSFCVIFLLRMLGMFMILPIL), 43-63 (FLIGLSMGIYGISQVIFQIPF), 81-101 (FMFFIGNIISASIHSIWGLII), 134-154 (AIGVSFAISFLIAVVSGPIIV), 162-182 (IFWISAFLSIVCMIIVCFFVP), 213-233 (FYLGVFFLHFLLMIKFTMIPN), 246-266 (WKVYLGTILISFFVLFLFIFY), 272-292 (ILENIIEICILFILFSEIIFL), 298-318 (LLFLIISLQIFFISFNFLEVF), 341-361 (TSQFLGIFFGGVFSGWLYSFL), and 363-383 (FSQIFYFELFIILLWLIFSFF).

Belongs to the major facilitator superfamily.

It is found in the cell membrane. This is an uncharacterized protein from Buchnera aphidicola subsp. Acyrthosiphon pisum (strain APS) (Acyrthosiphon pisum symbiotic bacterium).